A 93-amino-acid polypeptide reads, in one-letter code: Phosphoribosyl-ATP pyrophosphatase (93 aa).

The protein belongs to the PRA-PH family.

Its subcellular location is the cytoplasm. It catalyses the reaction 1-(5-phospho-beta-D-ribosyl)-ATP + H2O = 1-(5-phospho-beta-D-ribosyl)-5'-AMP + diphosphate + H(+). It functions in the pathway amino-acid biosynthesis; L-histidine biosynthesis; L-histidine from 5-phospho-alpha-D-ribose 1-diphosphate: step 2/9. The polypeptide is Phosphoribosyl-ATP pyrophosphatase (Mycolicibacterium smegmatis (strain ATCC 700084 / mc(2)155) (Mycobacterium smegmatis)).